Reading from the N-terminus, the 214-residue chain is Osteoclast-stimulating factor 1 (214 aa).

Ser2 carries the post-translational modification N-acetylserine. The region spanning 12–71 (GQVKVFRALYTFEPRTPDELYFEEGDIIYITDMSDTNWWKGTCKGRTGLIPSNYVAEQAE) is the SH3 domain. 3 ANK repeats span residues 72–101 (SIDNPLHEAAKRGNLSWLRECLDNRVGVNG), 105–135 (AGSTALYWACHGGHRDIVEMLFTQPNIELNQ), and 139–168 (LGDTALHAAAWKGYADIVQLLLEKGARTDL). A phosphoserine mark is found at Ser202 and Ser213.

In terms of assembly, interacts with SRC and SMN1. Interacts with FASLG.

The protein resides in the cytoplasm. Induces bone resorption, acting probably through a signaling cascade which results in the secretion of factor(s) enhancing osteoclast formation and activity. This is Osteoclast-stimulating factor 1 (OSTF1) from Bos taurus (Bovine).